The primary structure comprises 282 residues: E3 ubiquitin-protein ligase Siah1 (282 aa).

The segment at 1 to 28 is disordered; that stretch reads MSRQTATALPTGTSKCPPSQRVPTLSGT. The RING-type zinc finger occupies 41–76; the sequence is CPVCFDYVLPPILQCQSGHLVCSNCRPKLTCCPTCR. Residues 90–282 form an SBD region; sequence VANSVLFPCK…LGINVTISMC (193 aa). The SIAH-type zinc-finger motif lies at 93 to 153; sequence SVLFPCKYAS…VMPHLLHQHK (61 aa). 8 residues coordinate Zn(2+): Cys98, Cys105, His117, Cys121, Cys128, Cys135, His147, and His152.

It belongs to the SINA (Seven in absentia) family. As to quaternary structure, homodimer.

It catalyses the reaction S-ubiquitinyl-[E2 ubiquitin-conjugating enzyme]-L-cysteine + [acceptor protein]-L-lysine = [E2 ubiquitin-conjugating enzyme]-L-cysteine + N(6)-ubiquitinyl-[acceptor protein]-L-lysine.. Its pathway is protein modification; protein ubiquitination. Its function is as follows. E3 ubiquitin-protein ligase that mediates ubiquitination and subsequent proteasomal degradation of target proteins. E3 ubiquitin ligases accept ubiquitin from an E2 ubiquitin-conjugating enzyme in the form of a thioester and then directly transfers the ubiquitin to targeted substrates. It probably triggers the ubiquitin-mediated degradation of different substrates. This Danio rerio (Zebrafish) protein is E3 ubiquitin-protein ligase Siah1 (siah1).